The following is a 76-amino-acid chain: Kappa-actitoxin-Avd4a (76 aa).

Residues 1–19 form the signal peptide; it reads MNKALFLCLVVLCAAVVFA. Positions 20–31 are excised as a propeptide; it reads AEDLQKAKHAPF. Intrachain disulfides connect Cys37–Cys72, Cys39–Cys65, and Cys55–Cys73.

This sequence belongs to the sea anemone type 3 (BDS) potassium channel toxin family. In terms of tissue distribution, highly expressed in the ectodermal tissue from the distal and proximal tentacles, body wall, and oral disk.

The protein resides in the secreted. The protein localises to the nematocyst. In terms of biological role, acts as a gating modifier on both Kv and Nav ion channels, and also acts on blood pressure. Voltage-dependently inhibits voltage-gated potassium channels Kv3 (Kv3.1/KCNC1, Kv3.2/KCNC2 and Kv3.4/KCNC4) and slows inactivation of the voltage-gated sodium channel Nav1.7/SCN9A. Inhibits all Kv3.1, Kv3.2 and Kv3.4 by about 50% when tested at a voltage of +40 mV (45%, 48% and 56%, respectively). May act by binding residues in voltage-sensing domains S3b and S4 of Kv3. On sodium channels, tests have been done on human Nav1.7/SCN9A (expressed in HEK293 cells) (EC(50)=3 nM) and rat SCG neurons that mostly carry Nav1.7 channels (EC(50)=300 nM). This toxin also reduces blood pressure. This is Kappa-actitoxin-Avd4a from Anemonia viridis (Snakelocks anemone).